Reading from the N-terminus, the 792-residue chain is Endonuclease MutS2 (792 aa).

335-342 is a binding site for ATP; that stretch reads GPNTGGKT. The Smr domain occupies 717–792; the sequence is VDLRGLNLEE…GAGVTIVKLK (76 aa).

It belongs to the DNA mismatch repair MutS family. MutS2 subfamily. Homodimer. Binds to stalled ribosomes, contacting rRNA.

Endonuclease that is involved in the suppression of homologous recombination and thus may have a key role in the control of bacterial genetic diversity. In terms of biological role, acts as a ribosome collision sensor, splitting the ribosome into its 2 subunits. Detects stalled/collided 70S ribosomes which it binds and splits by an ATP-hydrolysis driven conformational change. Acts upstream of the ribosome quality control system (RQC), a ribosome-associated complex that mediates the extraction of incompletely synthesized nascent chains from stalled ribosomes and their subsequent degradation. Probably generates substrates for RQC. The sequence is that of Endonuclease MutS2 from Clostridioides difficile (strain 630) (Peptoclostridium difficile).